The sequence spans 161 residues: Large ribosomal subunit protein uL30m (161 aa).

The transit peptide at 1-34 directs the protein to the mitochondrion; it reads MAGILRLVVQRPPGGLQTVTKGVESLIGTDWIRH.

It belongs to the universal ribosomal protein uL30 family. In terms of assembly, component of the mitochondrial ribosome large subunit (39S) which comprises a 16S rRNA and about 50 distinct proteins.

Its subcellular location is the mitochondrion. This Macaca fascicularis (Crab-eating macaque) protein is Large ribosomal subunit protein uL30m (MRPL30).